A 105-amino-acid polypeptide reads, in one-letter code: uncharacterized protein (105 aa).

The chain crosses the membrane as a helical span at residues threonine 4–isoleucine 26.

The protein localises to the membrane. This is an uncharacterized protein from Rickettsia conorii (strain ATCC VR-613 / Malish 7).